Consider the following 467-residue polypeptide: Dihydrolipoyl dehydrogenase (467 aa).

Residues 33-41 (EPKYWGGIC), Lys-50, and Gly-113 contribute to the FAD site. A disulfide bond links Cys-41 and Cys-46. NAD(+)-binding positions include 181 to 185 (GAGAI), Glu-204, and 269 to 272 (AIGF). FAD is bound by residues Asp-312 and Ala-320. The Proton acceptor role is filled by His-446.

Belongs to the class-I pyridine nucleotide-disulfide oxidoreductase family. Homodimer. Part of the PDH complex, consisting of multiple copies of AceE (E1), DlaT (E2) and Lpd (E3), and of the BCKADH complex, consisting of multiple copies of BkdA/BkdB (E1), BkdC (E2) and Lpd (E3). FAD is required as a cofactor.

It is found in the cytoplasm. It carries out the reaction N(6)-[(R)-dihydrolipoyl]-L-lysyl-[protein] + NAD(+) = N(6)-[(R)-lipoyl]-L-lysyl-[protein] + NADH + H(+). Functionally, lipoamide dehydrogenase is a component of the alpha-ketoacid dehydrogenase complexes. Catalyzes the reoxidation of dihydrolipoyl groups which are covalently attached to the lipoate acyltransferase components (E2) of the complexes. The polypeptide is Dihydrolipoyl dehydrogenase (lpd) (Mycobacterium leprae (strain TN)).